Consider the following 166-residue polypeptide: Cofilin-1 (166 aa).

Ala-2 carries the post-translational modification N-acetylalanine. Ser-3 bears the Phosphoserine; by NRK mark. The ADF-H domain maps to 4-153 (GVAVSDGVIK…KDRCTLAEKL (150 aa)). Ser-8 is modified (phosphoserine). Lys-13 bears the N6-acetyllysine mark. Thr-25 is subject to Phosphothreonine. Positions 30-34 (KKRKK) match the Nuclear localization signal motif. A Phosphoserine modification is found at Ser-41. Position 63 is a phosphothreonine (Thr-63). At Tyr-68 the chain carries Phosphotyrosine. Residue Lys-73 is modified to N6-acetyllysine. Tyr-82 bears the Phosphotyrosine mark. Ser-108 carries the post-translational modification Phosphoserine. Lys-132 participates in a covalent cross-link: Glycyl lysine isopeptide (Lys-Gly) (interchain with G-Cter in SUMO2). Tyr-140 bears the Phosphotyrosine mark. Lys-144 is subject to N6-acetyllysine. Ser-156 carries the post-translational modification Phosphoserine.

The protein belongs to the actin-binding proteins ADF family. In terms of assembly, can bind G- and F-actin in a 1:1 ratio of cofilin to actin. It is a major component of intranuclear and cytoplasmic actin rods. Interacts with the subcortical maternal complex (SCMC) via interaction with TLE6 isoform 1 and NLRP5. Interacts with C9orf72. (Microbial infection) Interacts with human respiratory syncytial virus (HRSV) matrix protein; this interaction probably facilitates viral replication. Post-translationally, inactivated by phosphorylation on Ser-3. Phosphorylated on Ser-3 in resting cells. Dephosphorylated by PDXP/chronophin; this restores its activity in promoting actin filament depolymerization. The phosphorylation of Ser-24 may prevent recognition of the nuclear localization signal. Phosphorylated via a ARRB1-RAC1-LIMK1-PAK1 cascade upon active ligand stimulation of atypical chemokine receptor ACKR2. Widely distributed in various tissues.

It is found in the nucleus matrix. It localises to the cytoplasm. Its subcellular location is the cytoskeleton. The protein resides in the cell projection. The protein localises to the ruffle membrane. It is found in the lamellipodium membrane. It localises to the lamellipodium. Its subcellular location is the growth cone. The protein resides in the axon. Binds to F-actin and exhibits pH-sensitive F-actin depolymerizing activity. In conjunction with the subcortical maternal complex (SCMC), plays an essential role for zygotes to progress beyond the first embryonic cell divisions via regulation of actin dynamics. Required for the centralization of the mitotic spindle and symmetric division of zygotes. Plays a role in the regulation of cell morphology and cytoskeletal organization in epithelial cells. Required for the up-regulation of atypical chemokine receptor ACKR2 from endosomal compartment to cell membrane, increasing its efficiency in chemokine uptake and degradation. Required for neural tube morphogenesis and neural crest cell migration. The polypeptide is Cofilin-1 (CFL1) (Homo sapiens (Human)).